A 585-amino-acid chain; its full sequence is Squalene epoxidase 2, mitochondrial (585 aa).

Residues 1 to 45 (MKPFVIRNLPRFQSTLRSSLLYTNHRPSSRFSLSTRRFTTGATYI) constitute a mitochondrion transit peptide. A helical transmembrane segment spans residues 70–90 (AKIALDQFIASLFTFLLLYIL). Residues 132–133 (VA), 152–153 (ER), R160, R231, V247, D409, and M422 each bind FAD. Transmembrane regions (helical) follow at residues 493–513 (FDYLSLGGVFSSGPVALLSGL), 520–540 (LVLHFFAVAIYAVCRLMLPFP), and 545–565 (FWLGARIISSASSIIFPIIKA).

The protein belongs to the squalene monooxygenase family. FAD is required as a cofactor. As to expression, expressed mainly in inflorescences. Detected in seedlings, leaves, stems, and siliques.

The protein resides in the mitochondrion membrane. The enzyme catalyses squalene + reduced [NADPH--hemoprotein reductase] + O2 = (S)-2,3-epoxysqualene + oxidized [NADPH--hemoprotein reductase] + H2O + H(+). Its pathway is terpene metabolism; lanosterol biosynthesis; lanosterol from farnesyl diphosphate: step 2/3. Its function is as follows. Catalyzes the stereospecific oxidation of squalene to (S)-2,3-epoxysqualene, and is considered to be a rate-limiting enzyme in steroid biosynthesis. Produces primarily oxidosqualene. The sequence is that of Squalene epoxidase 2, mitochondrial (SQE2) from Arabidopsis thaliana (Mouse-ear cress).